Here is a 410-residue protein sequence, read N- to C-terminus: MNFDNLEREDEQIAHLVQKEKERQENSIELIASENFVSKAVMEAMGSYLTNKYAEGYPSKRYYGGCHVVDEVEDLARERVKKLFGAEHANVQPHSGSQANMAVYFSILEPGDTVLGMDLSHGGHLTHGSSVNFSGRLFNFVSYGVDKETETINYETVRELALKHKPKLIVAGASAYSRIIDFKTLREIADEVGAYLMVDIAHIAGLVATGLHPSPVPYADFVTSTTHKTLRGPRGGLILCKEKFAKVLDKNIFPGIQGGPLMHIIAAKAVCFKEALEPSFKTYMEQVVKNAHVLAEALEAYGFKLVSNGTDNHLILVDLTNKDITGKDAEILLDSIGITLNKNTVPNETRSPFVTSGVRIGTPAITTRGFKEEEMKEIASIINDAIKEKDGDLEPLKARVKALCAKYPLY.

Residues Leu119 and 123–125 (GHL) contribute to the (6S)-5,6,7,8-tetrahydrofolate site. Lys228 carries the N6-(pyridoxal phosphate)lysine modification. Position 351–353 (351–353 (SPF)) interacts with (6S)-5,6,7,8-tetrahydrofolate.

It belongs to the SHMT family. As to quaternary structure, homodimer. Pyridoxal 5'-phosphate serves as cofactor.

It localises to the cytoplasm. It carries out the reaction (6R)-5,10-methylene-5,6,7,8-tetrahydrofolate + glycine + H2O = (6S)-5,6,7,8-tetrahydrofolate + L-serine. The protein operates within one-carbon metabolism; tetrahydrofolate interconversion. Its pathway is amino-acid biosynthesis; glycine biosynthesis; glycine from L-serine: step 1/1. In terms of biological role, catalyzes the reversible interconversion of serine and glycine with tetrahydrofolate (THF) serving as the one-carbon carrier. This reaction serves as the major source of one-carbon groups required for the biosynthesis of purines, thymidylate, methionine, and other important biomolecules. Also exhibits THF-independent aldolase activity toward beta-hydroxyamino acids, producing glycine and aldehydes, via a retro-aldol mechanism. The chain is Serine hydroxymethyltransferase from Clostridium perfringens (strain 13 / Type A).